A 256-amino-acid chain; its full sequence is Trans-aconitate 2-methyltransferase (256 aa).

It belongs to the methyltransferase superfamily. Tam family.

It is found in the cytoplasm. The enzyme catalyses trans-aconitate + S-adenosyl-L-methionine = (E)-3-(methoxycarbonyl)pent-2-enedioate + S-adenosyl-L-homocysteine. Its function is as follows. Catalyzes the S-adenosylmethionine monomethyl esterification of trans-aconitate. The chain is Trans-aconitate 2-methyltransferase from Agrobacterium fabrum (strain C58 / ATCC 33970) (Agrobacterium tumefaciens (strain C58)).